The primary structure comprises 589 residues: TAF5-like RNA polymerase II p300/CBP-associated factor-associated factor 65 kDa subunit 5L (589 aa).

The span at A211–N221 shows a compositional bias: polar residues. The tract at residues A211 to S230 is disordered. WD repeat units lie at residues N266 to E305, G340 to L379, G382 to I421, G424 to L463, G466 to E505, and G508 to P547.

Belongs to the WD repeat TAF5 family. In terms of assembly, the PCAF complex is composed of a number of TBP-associated factors (TAFS), such as TAF5, TAF5L, TAF6, TAF6L, TAF9, TAF10 and TAF12, PCAF, and also PCAF-associated factors (PAFs), such as TADA2L/ADA2, TADA3L/ADA3 and SPT3. Component of the STAGA transcription coactivator-HAT complex, at least composed of SUPT3H, GCN5L2, TAF5L, TAF6L, SUPT7L, TADA3L, TAD1L, TAF10, TAF12, TRRAP and TAF9.

It localises to the nucleus. In terms of biological role, functions as a component of the PCAF complex. The PCAF complex is capable of efficiently acetylating histones in a nucleosomal context. The PCAF complex could be considered as the human version of the yeast SAGA complex. With TAF6L, acts as an epigenetic regulator essential for somatic reprogramming. Regulates target genes through H3K9ac deposition and MYC recruitment which trigger MYC regulatory network to orchestrate gene expression programs to control embryonic stem cell state. This Homo sapiens (Human) protein is TAF5-like RNA polymerase II p300/CBP-associated factor-associated factor 65 kDa subunit 5L.